The following is a 1079-amino-acid chain: Extracellular calcium-sensing receptor (1079 aa).

The N-terminal stretch at 1–19 is a signal peptide; it reads MAWFGYCLALLALTWHSSA. Over 20-610 the chain is Extracellular; it reads YGPDQRAQKK…KEIEFLAWTE (591 aa). Residues 22-188 are ligand-binding 1 (LB1); the sequence is PDQRAQKKGD…QFKSFLRTIP (167 aa). An intrachain disulfide couples Cys-60 to Cys-101. 66-70 is a binding site for phosphate; that stretch reads RGFRW. Ile-81, Ser-84, Leu-87, and Leu-88 together coordinate Ca(2+). An N-linked (GlcNAc...) asparagine glycan is attached at Asn-90. Residue Thr-100 coordinates Ca(2+). Asn-130 carries an N-linked (GlcNAc...) asparagine glycan. Thr-145 contributes to the Ca(2+) binding site. The L-tryptophan site is built by Ser-147, Ala-168, and Ser-170. Ser-170, Pro-188, Asp-190, Glu-231, and Asp-234 together coordinate Ca(2+). A ligand-binding 2 (LB2) region spans residues 189 to 324; it reads NDEHQATAMA…GGTIGFGLKA (136 aa). 7 disulfide bridges follow: Cys-236-Cys-561, Cys-358-Cys-395, Cys-437-Cys-449, Cys-542-Cys-562, Cys-546-Cys-565, Cys-568-Cys-582, and Cys-585-Cys-598. Spermine is bound by residues Asp-238 and Ser-240. 2 N-linked (GlcNAc...) asparagine glycosylation sites follow: Asn-261 and Asn-287. Position 297 (Glu-297) interacts with Ca(2+). Position 297 (Glu-297) interacts with L-tryptophan. Asn-386 is a glycosylation site (N-linked (GlcNAc...) asparagine). 415–417 serves as a coordination point for phosphate; it reads RIS. N-linked (GlcNAc...) asparagine glycans are attached at residues Asn-446, Asn-468, and Asn-488. Ca(2+) is bound at residue Tyr-489. Asn-541 carries N-linked (GlcNAc...) asparagine glycosylation. A cysteine-rich (CR) region spans residues 542–612; sequence CSRDCQAGTR…IEFLAWTEPF (71 aa). Gly-557 contributes to the Ca(2+) binding site. N-linked (GlcNAc...) asparagine glycosylation is present at Asn-594. Residues 611–636 form a helical membrane-spanning segment; that stretch reads PFGIALTLFAVLGIFLTAFVLGVFIK. Over 637-648 the chain is Cytoplasmic; the sequence is FRNTPIVKATNR. The tract at residues 637 to 648 is intracellular loop 1 (ICL1); it reads FRNTPIVKATNR. The chain crosses the membrane as a helical span at residues 649–668; sequence ELSYLLLFSLLCCFSSSLFF. Over 669–674 the chain is Extracellular; that stretch reads IGEPQD. The chain crosses the membrane as a helical span at residues 675 to 698; it reads WTCRLRQPAFGISFVLCISCILVK. The Cytoplasmic segment spans residues 699–722; sequence TNRVLLVFEAKIPTSFHRKWWGLN. Residues 699 to 722 are intracellular loop 2 (ICL2); the sequence is TNRVLLVFEAKIPTSFHRKWWGLN. The helical transmembrane segment at 723–745 threads the bilayer; sequence LQFLLVFLCTFMQIVICIIWLYT. Residues 746–769 lie on the Extracellular side of the membrane; sequence APPSSYRNHELEDEIIFITCHEGS. A helical transmembrane segment spans residues 770 to 789; it reads LMALGSLIGYTCLLAAICFF. Topologically, residues 790 to 805 are cytoplasmic; sequence FAFKSRKLPENFNEAK. The segment at 790–805 is intracellular loop 3 (ICL3); sequence FAFKSRKLPENFNEAK. Residues 806–828 form a helical membrane-spanning segment; that stretch reads FITFSMLIFFIVWISFIPAYAST. The Extracellular portion of the chain corresponds to 829-832; sequence YGKF. A helical membrane pass occupies residues 833-854; that stretch reads VSAVEVIAILAASFGLLACIFF. Over 855–1079 the chain is Cytoplasmic; that stretch reads NKVYIILFKP…SSVTENILHS (225 aa). The interval 855–1079 is C-terminus; the sequence is NKVYIILFKP…SSVTENILHS (225 aa). The interval 880-900 is interaction with RNF19A; the sequence is AFKVAARATLRRPNISRKRSS. A Phosphothreonine modification is found at Thr-888. The interval 890–898 is arginine-rich retention motif; the sequence is RRPNISRKR. The disordered stretch occupies residues 894-964; sequence ISRKRSSSLG…QQQPQQPRCK (71 aa). The residue at position 899 (Ser-899) is a Phosphoserine. Residues 900-918 are compositionally biased toward low complexity; sequence SSLGGSTGSIPSSSISSKS. Residues 919-931 show a composition bias toward basic and acidic residues; the sequence is NSEDRFPQPERQK. At Ser-920 the chain carries Phosphoserine. The span at 932 to 961 shows a compositional bias: low complexity; that stretch reads QQQPLALTQQEQQQQPLTLQPQQQQQPQQP. At Ser-1062 the chain carries Phosphoserine.

Belongs to the G-protein coupled receptor 3 family. Homodimer; disulfide-linked. Interacts with VCP. Interacts with ARRB1. Post-translationally, phosphorylation at Thr-888 by PKC impairs coupling with G(q)/G(11) G-proteins, while it does not affect G(i)/G(o)-coupling. Phosphorylation at Ser-899 by PKA promote plasma membrane localization. Ubiquitinated by RNF19A; which induces proteasomal degradation. In terms of tissue distribution, epidermis, kidney and cartilage.

The protein localises to the cell membrane. With respect to regulation, in resting state, adopts an open conformation, anion-binding promoting the inactive configuration. Upon aromatic amino acid-binding, the groove in the extracellular venus flytrap module is closed, thereby inducing the formation of a novel homodimer interface between subunits. Calcium ions stabilize the active state by enhancing homodimer interactions between membrane-proximal domains to fully activate the receptor. Upon activation, the homodimer adopts an asymmetric configuration of the 7-transmembrane region that primes one protomer for G-protein coupling. G-protein binding expands the transmembrane dimer interface; the restriction imposed by the receptor dimer, in combination with intracellular loop 2 (ICL2), enables G-protein activation by facilitating conformational transition of G-protein alpha. Coupling to different classes of G-proteins results in distinct CASR-G-protein interfaces. In terms of biological role, G-protein-coupled receptor that senses changes in the extracellular concentration of calcium ions and plays a key role in maintaining calcium homeostasis. Senses fluctuations in the circulating calcium concentration: activated by elevated circulating calcium, leading to decreased parathyroid hormone (PTH) secretion in parathyroid glands. In kidneys, acts as a key regulator of renal tubular calcium resorption. Ligand binding causes a conformation change that triggers signaling via guanine nucleotide-binding proteins (G-proteins) and modulates the activity of downstream effectors. CASR is coupled with different G(q)/G(11), G(i)/G(o)- or G(s)-classes of G-proteins depending on the context. In the parathyroid and kidney, CASR signals through G(q)/G(11) and G(i)/G(o) G-proteins: G(q)/G(11) coupling activates phospholipase C-beta, releasing diacylglycerol (DAG) and inositol 1,4,5-trisphosphate (IP3) second messengers, while G(i)/G(o) coupling mediates inhibition of adenylate cyclase activity. The G-protein-coupled receptor activity is activated by a co-agonist mechanism: aromatic amino acids, such as Trp or Phe, act concertedly with divalent cations, such as calcium or magnesium, to achieve full receptor activation. Acts as an activator of the NLRP3 inflammasome via G(i)/G(o)-mediated signaling: down-regulation of cyclic AMP (cAMP) relieving NLRP3 inhibition by cAMP. Acts as a regulator of proton-sensing receptor GPR68 in a seesaw manner: CASR-mediated signaling inhibits GPR68 signaling in response to extracellular calcium, while GPR68 inhibits CASR in presence of extracellular protons. This chain is Extracellular calcium-sensing receptor, found in Mus musculus (Mouse).